Consider the following 221-residue polypeptide: Thiamine-phosphate synthase (221 aa).

Residues 46-50 (QFREK) and asparagine 82 contribute to the 4-amino-2-methyl-5-(diphosphooxymethyl)pyrimidine site. Aspartate 83 and aspartate 102 together coordinate Mg(2+). Serine 121 is a binding site for 4-amino-2-methyl-5-(diphosphooxymethyl)pyrimidine. 148–150 (TQS) is a binding site for 2-[(2R,5Z)-2-carboxy-4-methylthiazol-5(2H)-ylidene]ethyl phosphate. Lysine 151 is a 4-amino-2-methyl-5-(diphosphooxymethyl)pyrimidine binding site. Residues glycine 180 and 200-201 (IS) contribute to the 2-[(2R,5Z)-2-carboxy-4-methylthiazol-5(2H)-ylidene]ethyl phosphate site.

The protein belongs to the thiamine-phosphate synthase family. The cofactor is Mg(2+).

The enzyme catalyses 2-[(2R,5Z)-2-carboxy-4-methylthiazol-5(2H)-ylidene]ethyl phosphate + 4-amino-2-methyl-5-(diphosphooxymethyl)pyrimidine + 2 H(+) = thiamine phosphate + CO2 + diphosphate. It carries out the reaction 2-(2-carboxy-4-methylthiazol-5-yl)ethyl phosphate + 4-amino-2-methyl-5-(diphosphooxymethyl)pyrimidine + 2 H(+) = thiamine phosphate + CO2 + diphosphate. The catalysed reaction is 4-methyl-5-(2-phosphooxyethyl)-thiazole + 4-amino-2-methyl-5-(diphosphooxymethyl)pyrimidine + H(+) = thiamine phosphate + diphosphate. The protein operates within cofactor biosynthesis; thiamine diphosphate biosynthesis; thiamine phosphate from 4-amino-2-methyl-5-diphosphomethylpyrimidine and 4-methyl-5-(2-phosphoethyl)-thiazole: step 1/1. Functionally, condenses 4-methyl-5-(beta-hydroxyethyl)thiazole monophosphate (THZ-P) and 2-methyl-4-amino-5-hydroxymethyl pyrimidine pyrophosphate (HMP-PP) to form thiamine monophosphate (TMP). The sequence is that of Thiamine-phosphate synthase from Pasteurella multocida (strain Pm70).